A 144-amino-acid chain; its full sequence is Small ribosomal subunit protein bS6 (144 aa).

Residues 97–144 are disordered; the sequence is EEGPSAMMRKADRDRERDERGGPREGGFRSERGPRRPREEETTASVEE. Residues 105–137 are compositionally biased toward basic and acidic residues; that stretch reads RKADRDRERDERGGPREGGFRSERGPRRPREEE.

The protein belongs to the bacterial ribosomal protein bS6 family.

Functionally, binds together with bS18 to 16S ribosomal RNA. This chain is Small ribosomal subunit protein bS6, found in Afipia carboxidovorans (strain ATCC 49405 / DSM 1227 / KCTC 32145 / OM5) (Oligotropha carboxidovorans).